Here is a 513-residue protein sequence, read N- to C-terminus: Zinc finger CCCH-type with G patch domain-containing protein (513 aa).

The C3H1-type zinc-finger motif lies at 155-178 (PCSYYLEGECRFDETKCRFSHGAL). Residues 252–261 (DQEEDDELSS) are compositionally biased toward acidic residues. Residues 252–282 (DQEEDDELSSEESNSSMNNESSDEAESDMDD) are disordered. Over residues 262-271 (EESNSSMNNE) the composition is skewed to low complexity. Over residues 272-282 (SSDEAESDMDD) the composition is skewed to acidic residues. Residues 312 to 358 (TRGIGSKLMEKMGYIHGTGLGSDGRGIVTPVSAQILPQGRSLDACME) form the G-patch domain. Residues 478–495 (VQMQSHKQELATLQAQER) are compositionally biased toward polar residues. The segment at 478 to 513 (VQMQSHKQELATLQAQERSLSKEQQTRKSKNKMFEF) is disordered. The segment covering 496 to 513 (SLSKEQQTRKSKNKMFEF) has biased composition (basic and acidic residues).

It is found in the nucleus. In terms of biological role, transcription repressor. The polypeptide is Zinc finger CCCH-type with G patch domain-containing protein (Drosophila erecta (Fruit fly)).